A 269-amino-acid chain; its full sequence is 3-methyl-2-oxobutanoate hydroxymethyltransferase (269 aa).

2 residues coordinate Mg(2+): aspartate 50 and aspartate 89. Residues 50 to 51, aspartate 89, and lysine 118 each bind 3-methyl-2-oxobutanoate; that span reads DS. A Mg(2+)-binding site is contributed by glutamate 120. Glutamate 187 functions as the Proton acceptor in the catalytic mechanism.

The protein belongs to the PanB family. In terms of assembly, homodecamer; pentamer of dimers. Mg(2+) serves as cofactor.

The protein localises to the cytoplasm. It carries out the reaction 3-methyl-2-oxobutanoate + (6R)-5,10-methylene-5,6,7,8-tetrahydrofolate + H2O = 2-dehydropantoate + (6S)-5,6,7,8-tetrahydrofolate. It participates in cofactor biosynthesis; (R)-pantothenate biosynthesis; (R)-pantoate from 3-methyl-2-oxobutanoate: step 1/2. Its function is as follows. Catalyzes the reversible reaction in which hydroxymethyl group from 5,10-methylenetetrahydrofolate is transferred onto alpha-ketoisovalerate to form ketopantoate. In Aliarcobacter butzleri (strain RM4018) (Arcobacter butzleri), this protein is 3-methyl-2-oxobutanoate hydroxymethyltransferase.